An 87-amino-acid chain; its full sequence is Small ribosomal subunit protein uS15 (87 aa).

This sequence belongs to the universal ribosomal protein uS15 family. As to quaternary structure, part of the 30S ribosomal subunit. Forms a bridge to the 50S subunit in the 70S ribosome, contacting the 23S rRNA.

In terms of biological role, one of the primary rRNA binding proteins, it binds directly to 16S rRNA where it helps nucleate assembly of the platform of the 30S subunit by binding and bridging several RNA helices of the 16S rRNA. Functionally, forms an intersubunit bridge (bridge B4) with the 23S rRNA of the 50S subunit in the ribosome. The sequence is that of Small ribosomal subunit protein uS15 from Pseudothermotoga lettingae (strain ATCC BAA-301 / DSM 14385 / NBRC 107922 / TMO) (Thermotoga lettingae).